Reading from the N-terminus, the 370-residue chain is GTPase Obg (370 aa).

One can recognise an Obg domain in the interval 1 to 159 (MKFIDEARIE…RMLRLELKVL (159 aa)). Residues 127-146 (NLHFKSSTNRAPRQKTDGKP) are disordered. In terms of domain architecture, OBG-type G spans 160–334 (ADVGLLGMPN…LCYAIYDYLA (175 aa)). Residues 166–173 (GMPNAGKS), 191–195 (FTTLA), 213–216 (DIPG), 284–287 (NKLD), and 315–317 (SAL) each bind GTP. Mg(2+)-binding residues include Ser-173 and Thr-193. The segment at 350 to 370 (ADVRFRDAPPSDGGATSGGDA) is disordered.

This sequence belongs to the TRAFAC class OBG-HflX-like GTPase superfamily. OBG GTPase family. Monomer. Mg(2+) serves as cofactor.

The protein localises to the cytoplasm. In terms of biological role, an essential GTPase which binds GTP, GDP and possibly (p)ppGpp with moderate affinity, with high nucleotide exchange rates and a fairly low GTP hydrolysis rate. Plays a role in control of the cell cycle, stress response, ribosome biogenesis and in those bacteria that undergo differentiation, in morphogenesis control. The chain is GTPase Obg from Burkholderia vietnamiensis (strain G4 / LMG 22486) (Burkholderia cepacia (strain R1808)).